Here is a 137-residue protein sequence, read N- to C-terminus: Ribosomal RNA large subunit methyltransferase H (137 aa).

Residues Leu56, Gly85, and 104 to 109 (LSPLTL) contribute to the S-adenosyl-L-methionine site.

It belongs to the RNA methyltransferase RlmH family. Homodimer.

It localises to the cytoplasm. The enzyme catalyses pseudouridine(1915) in 23S rRNA + S-adenosyl-L-methionine = N(3)-methylpseudouridine(1915) in 23S rRNA + S-adenosyl-L-homocysteine + H(+). Specifically methylates the pseudouridine at position 1915 (m3Psi1915) in 23S rRNA. The polypeptide is Ribosomal RNA large subunit methyltransferase H (Thermus thermophilus (strain ATCC 27634 / DSM 579 / HB8)).